The chain runs to 426 residues: Trigger factor (426 aa).

Positions 166 to 249 (GDIVTFDFKG…IIEVKARELP (84 aa)) constitute a PPIase FKBP-type domain.

This sequence belongs to the FKBP-type PPIase family. Tig subfamily.

The protein resides in the cytoplasm. It carries out the reaction [protein]-peptidylproline (omega=180) = [protein]-peptidylproline (omega=0). In terms of biological role, involved in protein export. Acts as a chaperone by maintaining the newly synthesized protein in an open conformation. Functions as a peptidyl-prolyl cis-trans isomerase. This Mesoplasma florum (strain ATCC 33453 / NBRC 100688 / NCTC 11704 / L1) (Acholeplasma florum) protein is Trigger factor.